A 125-amino-acid chain; its full sequence is uncharacterized protein (125 aa).

3 consecutive transmembrane segments (helical) span residues 20 to 42, 57 to 76, and 81 to 103; these read RNGG…LTIL, LMNA…GVVV, and YLFV…YMAS.

Its subcellular location is the cell membrane. This is an uncharacterized protein from Archaeoglobus fulgidus (strain ATCC 49558 / DSM 4304 / JCM 9628 / NBRC 100126 / VC-16).